A 903-amino-acid polypeptide reads, in one-letter code: Translation initiation factor IF-2 (903 aa).

The segment at 49–314 (LNREHGSGPD…GSSLQQGFNK (266 aa)) is disordered. Polar residues predominate over residues 68 to 82 (STLNIQGTGGKSKSV). 2 stretches are compositionally biased toward basic and acidic residues: residues 93–163 (VKRD…EAAE) and 174–225 (EVSK…ENAT). A compositionally biased stretch (basic residues) spans 265 to 279 (GRARPAKVARQKKSN). A compositionally biased stretch (basic and acidic residues) spans 280–293 (KHSESKADREEARA). Residues 402–571 (PRAPVVTIMG…LLQSEVLELK (170 aa)) enclose the tr-type G domain. Residues 411–418 (GHVDHGKT) are G1. 411–418 (GHVDHGKT) contacts GTP. The G2 stretch occupies residues 436 to 440 (GITQH). Residues 457–460 (DTPG) form a G3 region. Residues 457 to 461 (DTPGH) and 511 to 514 (NKID) each bind GTP. Residues 511 to 514 (NKID) form a G4 region. The G5 stretch occupies residues 547 to 549 (SAK).

It belongs to the TRAFAC class translation factor GTPase superfamily. Classic translation factor GTPase family. IF-2 subfamily.

It localises to the cytoplasm. One of the essential components for the initiation of protein synthesis. Protects formylmethionyl-tRNA from spontaneous hydrolysis and promotes its binding to the 30S ribosomal subunits. Also involved in the hydrolysis of GTP during the formation of the 70S ribosomal complex. This chain is Translation initiation factor IF-2, found in Cronobacter sakazakii (strain ATCC BAA-894) (Enterobacter sakazakii).